The following is a 509-amino-acid chain: Membrane-bound lytic murein transglycosylase F (509 aa).

An N-terminal signal peptide occupies residues 1–40 (MLASACTHSWRTGRFLNRIIKSSVQTLTAAALIANLSACS). The tract at residues 41–280 (RPTTLEKIEQ…YLQERYFGHV (240 aa)) is non-LT domain. Residues 281–509 (NQLNYVGART…APFRVTPPML (229 aa)) form an LT domain region. Glu-327 is a catalytic residue. A disordered region spans residues 474 to 500 (DGSVAQNEDAPTTGADGTTEETPAIPA).

It in the N-terminal section; belongs to the bacterial solute-binding protein 3 family. In the C-terminal section; belongs to the transglycosylase Slt family.

The protein localises to the cell outer membrane. The enzyme catalyses Exolytic cleavage of the (1-&gt;4)-beta-glycosidic linkage between N-acetylmuramic acid (MurNAc) and N-acetylglucosamine (GlcNAc) residues in peptidoglycan, from either the reducing or the non-reducing ends of the peptidoglycan chains, with concomitant formation of a 1,6-anhydrobond in the MurNAc residue.. Functionally, murein-degrading enzyme that degrades murein glycan strands and insoluble, high-molecular weight murein sacculi, with the concomitant formation of a 1,6-anhydromuramoyl product. Lytic transglycosylases (LTs) play an integral role in the metabolism of the peptidoglycan (PG) sacculus. Their lytic action creates space within the PG sacculus to allow for its expansion as well as for the insertion of various structures such as secretion systems and flagella. This chain is Membrane-bound lytic murein transglycosylase F, found in Hahella chejuensis (strain KCTC 2396).